We begin with the raw amino-acid sequence, 594 residues long: Homeobox protein prospero homolog 1 (594 aa).

Composition is skewed to polar residues over residues 1-13 and 36-50; these read MSSGLPSIAATAQ and PPVNSNGSTPNSSNR. Disordered regions lie at residues 1 to 20, 30 to 180, and 358 to 389; these read MSSGLPSIAATAQPSANGFS, IYYS…FQPQ, and DTSSEMKKKRTKVEIKKEDAMSSRASPLSASA. Residues 73 to 101 are compositionally biased toward low complexity; that stretch reads STSVSSNSSSSSSTSNTNSTPSSSSTSSK. The segment covering 105–117 has biased composition (polar residues); the sequence is EGMTETETMTASI. Basic and acidic residues predominate over residues 118 to 135; that stretch reads EQEKVIQNEESEAGKDGM. The segment covering 136-162 has biased composition (acidic residues); that stretch reads EEHDDGMNDFEIIDDTNDEVEESEERE. Residues 369–378 show a composition bias toward basic and acidic residues; sequence KVEIKKEDAM. Residues 379-389 show a composition bias toward low complexity; that stretch reads SSRASPLSASA. Positions 435–493 constitute a Prospero-type homeo domain; sequence SSMLTPMHLRKAKLMFFYTRYPNSNLLKSYFPDIRFNKNNTAQLVKWFSNFREFYYNQM. The homeo-Prospero stretch occupies residues 435-593; that stretch reads SSMLTPMHLR…KEPNFLERLE (159 aa). In terms of domain architecture, Prospero spans 494-593; sequence EKFARQALAE…KEPNFLERLE (100 aa).

Belongs to the Prospero homeodomain family.

The protein resides in the nucleus. Functionally, transcription factor involved in developmental processes. Controls the transcription of genes required for excretory canal formation. The protein is Homeobox protein prospero homolog 1 of Caenorhabditis elegans.